The chain runs to 161 residues: Tropomyosin (161 aa).

Residues 1–161 (MDKLREKINA…DEVHQALEDL (161 aa)) adopt a coiled-coil conformation. Residues 40–52 (EQEYESLSRKSEA) show a composition bias toward basic and acidic residues. Disordered regions lie at residues 40 to 65 (EQEY…EETK) and 107 to 134 (EKMR…DDME).

Homodimer.

It is found in the cytoplasm. It localises to the cytoskeleton. Functionally, forms part of the F-actin contractile ring during cytokinesis. In Schizosaccharomyces pombe (strain 972 / ATCC 24843) (Fission yeast), this protein is Tropomyosin (cdc8).